A 169-amino-acid polypeptide reads, in one-letter code: Required for excision 1-B domain-containing protein (169 aa).

In Mus musculus (Mouse), this protein is Required for excision 1-B domain-containing protein.